A 600-amino-acid chain; its full sequence is MGLCHGKSAAVLEPTVEEEEEGATRVAEAAAAPAKPASPAPSAAAAAAAPAKPGTPKQHKFPFYLPSPLPASSYKGSPANSSVASTPARGGFKRPFPPPSPAKHIRALLARRHGSVKPNEASIPESGEPGVALDKGFGFSRHFAAKYELGREVGRGHFGYTCAATCKKGELKGDDVAVKVIPKAKMTTAIAIEDVRREVRILSSLAGHSNLVQFYDAYEDEENVYIVMELCKGGELLDRILARGGKYSEEDAKVVMRQILSVASFCHLQGVVHRDLKPENFLFSSKDENSAMKVIDFGLSDFVKPDERLNDIVGSAYYVAPEVLHRSYGTEADMWSIGVIVYILLCGSRPFWARTESGIFRAVLKADPSFEEAPWPTLSAEAKDFVRRLLNKDYRKRMTAAQALCHPWIRGTEEVKLPLDMIIYRLMRAYISSSSLRRAALRALAKTLTTDQIYYLREQFELIGPNKSDLITLQNLKTALMKNSTNAMKDSRVVDFVNTISNIQYRKLDFEEFSAAAISVYQMEGLETWEQHARQAYEFFDKEGNRPIVIDELASELGLGPSVPLHVVLQDWIRHPDGKLSFLGFMKLLHGVSSRTIPKT.

A disordered region spans residues 1–99 (MGLCHGKSAA…GGFKRPFPPP (99 aa)). A compositionally biased stretch (low complexity) spans 24-56 (TRVAEAAAAPAKPASPAPSAAAAAAAPAKPGTP). Polar residues predominate over residues 74 to 85 (YKGSPANSSVAS). Residues 147-409 (YELGREVGRG…AAQALCHPWI (263 aa)) enclose the Protein kinase domain. Residues 153–161 (VGRGHFGYT) and lysine 179 contribute to the ATP site. The active-site Proton acceptor is aspartate 275.

It belongs to the protein kinase superfamily. Ser/Thr protein kinase family. In terms of processing, autophosphorylated. In terms of tissue distribution, highly expressed in roots in the zone of cell division. Expressed in leaf mesophyll cells and at lower levels in mature stems.

The enzyme catalyses L-seryl-[protein] + ATP = O-phospho-L-seryl-[protein] + ADP + H(+). The catalysed reaction is L-threonyl-[protein] + ATP = O-phospho-L-threonyl-[protein] + ADP + H(+). Activated by the binding of calmodulin-like protein 1 (CML1) in the presence of Ca(2+). Possesses kinase activity in vitro. This chain is Calcium/calmodulin-dependent serine/threonine-protein kinase 1 (CAMK1), found in Oryza sativa subsp. japonica (Rice).